The chain runs to 191 residues: Protein adenylyltransferase NmFic (191 aa).

Residues 37-162 (GTTAGLQQIH…NDLELRFLLK (126 aa)) enclose the Fido domain. Residues Lys-67, 104-107 (NIAH), 112-118 (GNGRSTR), and 140-143 (KTLY) contribute to the ATP site. Positions 182-187 (SYYYEG) match the Inhibitory (S/T)XXXE(G/N) motif motif. At Tyr-183 the chain carries O-AMP-tyrosine; in vitro. Glu-186 is a binding site for ATP.

Homodimer. Auto-AMPylation at Tyr-183 in vitro.

The catalysed reaction is L-tyrosyl-[protein] + ATP = O-(5'-adenylyl)-L-tyrosyl-[protein] + diphosphate. The enzyme catalyses L-threonyl-[protein] + ATP = 3-O-(5'-adenylyl)-L-threonyl-[protein] + diphosphate. With respect to regulation, adenylyltransferase activity is inhibited by the inhibitory helix present at the C-terminus: Glu-186 binds ATP and competes with ATP-binding at Arg-118, thereby preventing adenylyltransferase activity. Activation dissociates ATP-binding from Glu-186, allowing ordered binding of the entire ATP moiety with the alpha-phosphate in an orientation that is productive for accepting an incoming target hydroxyl side chain. Adenylyltransferase that mediates the addition of adenosine 5'-monophosphate (AMP) to specific residues of target proteins. The protein is Protein adenylyltransferase NmFic of Neisseria meningitidis serogroup B (strain ATCC BAA-335 / MC58).